Consider the following 178-residue polypeptide: Large ribosomal subunit protein uL6 (178 aa).

It belongs to the universal ribosomal protein uL6 family. As to quaternary structure, part of the 50S ribosomal subunit.

Its function is as follows. This protein binds to the 23S rRNA, and is important in its secondary structure. It is located near the subunit interface in the base of the L7/L12 stalk, and near the tRNA binding site of the peptidyltransferase center. The protein is Large ribosomal subunit protein uL6 of Streptococcus thermophilus (strain CNRZ 1066).